A 330-amino-acid polypeptide reads, in one-letter code: DNA-directed RNA polymerase subunit alpha (330 aa).

An alpha N-terminal domain (alpha-NTD) region spans residues 1–231 (MQTNLLKPKT…EQLAVFAQLE (231 aa)). An alpha C-terminal domain (alpha-CTD) region spans residues 250 to 330 (FDPILLRPVD…NWPPAGLDKR (81 aa)).

It belongs to the RNA polymerase alpha chain family. Homodimer. The RNAP catalytic core consists of 2 alpha, 1 beta, 1 beta' and 1 omega subunit. When a sigma factor is associated with the core the holoenzyme is formed, which can initiate transcription.

The catalysed reaction is RNA(n) + a ribonucleoside 5'-triphosphate = RNA(n+1) + diphosphate. DNA-dependent RNA polymerase catalyzes the transcription of DNA into RNA using the four ribonucleoside triphosphates as substrates. This chain is DNA-directed RNA polymerase subunit alpha, found in Paracidovorax citrulli (strain AAC00-1) (Acidovorax citrulli).